A 106-amino-acid polypeptide reads, in one-letter code: uncharacterized protein (106 aa).

The next 3 helical transmembrane spans lie at 5-27 (IFVI…GIII), 42-64 (AVAA…LAYM), and 76-98 (LPYI…TNFF).

The protein localises to the cell membrane. This is an uncharacterized protein from Archaeoglobus fulgidus (strain ATCC 49558 / DSM 4304 / JCM 9628 / NBRC 100126 / VC-16).